Consider the following 383-residue polypeptide: Aquaporin-5 (383 aa).

Residues 1 to 46 (MSVTTLNGQPTLNISGPGQTALSRLDPLKKVFTKFFSSIPQKVRGH) are Cytoplasmic-facing. The helical transmembrane segment at 47–67 (VVAVIGELIGTTAFLFIAFSA) threads the bilayer. Residues 68–93 (AEVALASANDNKGDKVSYETKSISTT) lie on the Extracellular side of the membrane. Residues 94–114 (QILFIAFGAGISLVVNAWTFF) traverse the membrane as a helical segment. Residue Arg115 is a topological domain, cytoplasmic. The helical transmembrane segment at 116–136 (ISGGLFDPAVSIALFFVGAID) threads the bilayer. Positions 122-124 (DPA) match the NPA 1 motif. The Extracellular portion of the chain corresponds to 137-140 (LTRC). Residues 141–161 (VLLCIAQCLGAIAASAMAYGL) traverse the membrane as a helical segment. Residues 162–180 (YHGGLHTATTLKPGMSPAQ) are Cytoplasmic-facing. The helical transmembrane segment at 181 to 201 (GVIVEMILTCQLCFTVLMLAA) threads the bilayer. Topologically, residues 202–207 (EKHEAT) are extracellular. A helical transmembrane segment spans residues 208–228 (FLAPLGIGLSVFIGELAGVFW). Residues 229 to 252 (TGGSMNPARSLGPAVVTLSFPSYH) lie on the Cytoplasmic side of the membrane. The short motif at 234–236 (NPA) is the NPA 2 element. A helical transmembrane segment spans residues 253–273 (WIYWVGPIAGAGLASIIYKLI). Topologically, residues 274 to 383 (KALEYETAQL…DGFFGEMYAD (110 aa)) are extracellular. The segment covering 332–349 (ARKSSSLVPTKSTKSGNS) has biased composition (polar residues). A disordered region spans residues 332-383 (ARKSSSLVPTKSTKSGNSEVKKTETVVEEPAKTQPKPAPAADDGFFGEMYAD). Residues 350–362 (EVKKTETVVEEPA) are compositionally biased toward basic and acidic residues. Residues 363–372 (KTQPKPAPAA) show a composition bias toward low complexity.

Belongs to the MIP/aquaporin (TC 1.A.8) family.

It is found in the membrane. The catalysed reaction is H2O(in) = H2O(out). Its function is as follows. Water channel required to facilitate the transport of water across membranes. May play a role in the vegetative growth. The chain is Aquaporin-5 from Botryotinia fuckeliana (strain B05.10) (Noble rot fungus).